Here is a 141-residue protein sequence, read N- to C-terminus: Nucleoside triphosphatase NudI (141 aa).

The Nudix hydrolase domain maps to 1-141 (MRQRTIVCPL…RVTLSQKGLL (141 aa)). The Nudix box signature appears at 38–59 (GGVEPVERIEEALRREIREELG).

It belongs to the Nudix hydrolase family. NudI subfamily. In terms of assembly, monomer. The cofactor is Mg(2+).

The catalysed reaction is a ribonucleoside 5'-triphosphate + H2O = a ribonucleoside 5'-phosphate + diphosphate + H(+). The enzyme catalyses a 2'-deoxyribonucleoside 5'-triphosphate + H2O = a 2'-deoxyribonucleoside 5'-phosphate + diphosphate + H(+). It carries out the reaction dUTP + H2O = dUMP + diphosphate + H(+). It catalyses the reaction dTTP + H2O = dTMP + diphosphate + H(+). The catalysed reaction is dCTP + H2O = dCMP + diphosphate + H(+). In terms of biological role, catalyzes the hydrolysis of nucleoside triphosphates, with a preference for pyrimidine deoxynucleoside triphosphates (dUTP, dTTP and dCTP). The polypeptide is Nucleoside triphosphatase NudI (Klebsiella pneumoniae (strain 342)).